The sequence spans 42 residues: Bacteriocin bavaricin-MN (42 aa).

A disulfide bond links Cys10 and Cys15.

The protein belongs to the bacteriocin class IIA/YGNGV family.

It localises to the secreted. Has antimicrobial activity. This is Bacteriocin bavaricin-MN from Latilactobacillus sakei (Lactobacillus sakei).